Consider the following 336-residue polypeptide: Ketol-acid reductoisomerase (NADP(+)) 1 (336 aa).

The region spanning 2–181 is the KARI N-terminal Rossmann domain; sequence AKVYYEKDVT…GATRAGVLET (180 aa). NADP(+)-binding positions include 25 to 28, R48, S52, and 82 to 85; these read YGSQ and DELQ. Residue H107 is part of the active site. Position 133 (G133) interacts with NADP(+). Residues 182-327 enclose the KARI C-terminal knotted domain; the sequence is TFKEETETDL…RKLREMMPFV (146 aa). Residues D190, E194, E226, and E230 each contribute to the Mg(2+) site. Residue S251 participates in substrate binding.

Belongs to the ketol-acid reductoisomerase family. It depends on Mg(2+) as a cofactor.

It carries out the reaction (2R)-2,3-dihydroxy-3-methylbutanoate + NADP(+) = (2S)-2-acetolactate + NADPH + H(+). The enzyme catalyses (2R,3R)-2,3-dihydroxy-3-methylpentanoate + NADP(+) = (S)-2-ethyl-2-hydroxy-3-oxobutanoate + NADPH + H(+). The protein operates within amino-acid biosynthesis; L-isoleucine biosynthesis; L-isoleucine from 2-oxobutanoate: step 2/4. Its pathway is amino-acid biosynthesis; L-valine biosynthesis; L-valine from pyruvate: step 2/4. Involved in the biosynthesis of branched-chain amino acids (BCAA). Catalyzes an alkyl-migration followed by a ketol-acid reduction of (S)-2-acetolactate (S2AL) to yield (R)-2,3-dihydroxy-isovalerate. In the isomerase reaction, S2AL is rearranged via a Mg-dependent methyl migration to produce 3-hydroxy-3-methyl-2-ketobutyrate (HMKB). In the reductase reaction, this 2-ketoacid undergoes a metal-dependent reduction by NADPH to yield (R)-2,3-dihydroxy-isovalerate. In Bacillus thuringiensis subsp. konkukian (strain 97-27), this protein is Ketol-acid reductoisomerase (NADP(+)) 1.